The primary structure comprises 576 residues: Peptidoglycan D,D-transpeptidase FtsI (576 aa).

The chain crosses the membrane as a helical span at residues 22-42; the sequence is ITILLSLIIITIILVLSRITF. The Acyl-ester intermediate role is filled by serine 308.

The protein belongs to the transpeptidase family. FtsI subfamily.

The protein resides in the cell inner membrane. It catalyses the reaction Preferential cleavage: (Ac)2-L-Lys-D-Ala-|-D-Ala. Also transpeptidation of peptidyl-alanyl moieties that are N-acyl substituents of D-alanine.. The protein operates within cell wall biogenesis; peptidoglycan biosynthesis. Catalyzes cross-linking of the peptidoglycan cell wall at the division septum. This chain is Peptidoglycan D,D-transpeptidase FtsI, found in Buchnera aphidicola subsp. Baizongia pistaciae (strain Bp).